A 347-amino-acid chain; its full sequence is uncharacterized protein (347 aa).

This is an uncharacterized protein from Mycoplasma genitalium (strain ATCC 33530 / DSM 19775 / NCTC 10195 / G37) (Mycoplasmoides genitalium).